Reading from the N-terminus, the 555-residue chain is Methionine--tRNA ligase (555 aa).

The 'HIGH' region signature appears at Pro-13–His-23. Zn(2+) contacts are provided by Cys-144, Cys-147, Cys-157, and Cys-160. Residues Lys-330–Ser-334 carry the 'KMSKS' region motif. Lys-333 serves as a coordination point for ATP.

It belongs to the class-I aminoacyl-tRNA synthetase family. MetG type 1 subfamily. As to quaternary structure, monomer. The cofactor is Zn(2+).

Its subcellular location is the cytoplasm. It catalyses the reaction tRNA(Met) + L-methionine + ATP = L-methionyl-tRNA(Met) + AMP + diphosphate. Functionally, is required not only for elongation of protein synthesis but also for the initiation of all mRNA translation through initiator tRNA(fMet) aminoacylation. The chain is Methionine--tRNA ligase from Blochmanniella pennsylvanica (strain BPEN).